The primary structure comprises 687 residues: Polyphosphate kinase (687 aa).

Asn45 provides a ligand contact to ATP. Mg(2+) contacts are provided by Arg375 and Arg405. The active-site Phosphohistidine intermediate is the His435. 3 residues coordinate ATP: Tyr472, Arg568, and His596.

The protein belongs to the polyphosphate kinase 1 (PPK1) family. It depends on Mg(2+) as a cofactor. An intermediate of this reaction is the autophosphorylated ppk in which a phosphate is covalently linked to a histidine residue through a N-P bond.

The enzyme catalyses [phosphate](n) + ATP = [phosphate](n+1) + ADP. In terms of biological role, catalyzes the reversible transfer of the terminal phosphate of ATP to form a long-chain polyphosphate (polyP). In Burkholderia ambifaria (strain MC40-6), this protein is Polyphosphate kinase.